The following is a 78-amino-acid chain: Sec-independent protein translocase protein TatA (78 aa).

The helical transmembrane segment at 1 to 21 (MFGRIGLPEILLILAIALIIF) threads the bilayer. Residues 50-78 (EVNEVEEEVKENKSSDVKENEDNKTEKST) are disordered. The segment covering 59-78 (KENKSSDVKENEDNKTEKST) has biased composition (basic and acidic residues).

The protein belongs to the TatA/E family. In terms of assembly, forms a complex with TatC.

Its subcellular location is the cell membrane. Functionally, part of the twin-arginine translocation (Tat) system that transports large folded proteins containing a characteristic twin-arginine motif in their signal peptide across membranes. TatA could form the protein-conducting channel of the Tat system. This Natranaerobius thermophilus (strain ATCC BAA-1301 / DSM 18059 / JW/NM-WN-LF) protein is Sec-independent protein translocase protein TatA.